We begin with the raw amino-acid sequence, 256 residues long: uncharacterized protein (256 aa).

This is an uncharacterized protein from Escherichia coli (strain K12).